We begin with the raw amino-acid sequence, 244 residues long: DNA repair protein RecO (244 aa).

The protein belongs to the RecO family.

In terms of biological role, involved in DNA repair and RecF pathway recombination. The sequence is that of DNA repair protein RecO from Polynucleobacter asymbioticus (strain DSM 18221 / CIP 109841 / QLW-P1DMWA-1) (Polynucleobacter necessarius subsp. asymbioticus).